The primary structure comprises 245 residues: OCIA domain-containing protein 1 (245 aa).

In terms of domain architecture, OCIA spans 1-112; sequence MNGRADFREP…KKLENSPLGE (112 aa). Phosphoserine is present on residues Ser-108, Ser-116, Ser-123, and Ser-191. Disordered regions lie at residues 111 to 141 and 169 to 245; these read GEAL…VSGQ and NESA…TWDE. Composition is skewed to basic and acidic residues over residues 190–210 and 224–238; these read ESPK…RESY and PMHE…KVNK.

Belongs to the OCIAD1 family. In terms of assembly, interacts with OCIAD2. Interacts with STAT3. Isoform 1 is highly expressed in many tissues, including testis, brain, placenta, ovary, prostate and mammary gland. Isoform 2 expression is restricted to the central nervous system including brain, cerebellum and spinal cord.

It localises to the endosome. Functionally, maintains stem cell potency. Increases STAT3 phosphorylation and controls ERK phosphorylation. May act as a scaffold, increasing STAT3 recruitment onto endosomes. Involved in integrin-mediated cancer cell adhesion and colony formation in ovarian cancer. This is OCIA domain-containing protein 1 from Homo sapiens (Human).